A 395-amino-acid polypeptide reads, in one-letter code: Elongation factor Tu (395 aa).

Residues 10–204 (KPHVNIGTIG…EVDAYIPTPE (195 aa)) form the tr-type G domain. A G1 region spans residues 19–26 (GHVDHGKT). Residue 19–26 (GHVDHGKT) coordinates GTP. Threonine 26 is a binding site for Mg(2+). Residues 60–64 (GITIS) are G2. A G3 region spans residues 81-84 (DCPG). GTP-binding positions include 81 to 85 (DCPGH) and 136 to 139 (NKCD). The segment at 136–139 (NKCD) is G4. The segment at 174-176 (SAL) is G5.

It belongs to the TRAFAC class translation factor GTPase superfamily. Classic translation factor GTPase family. EF-Tu/EF-1A subfamily. As to quaternary structure, monomer.

The protein resides in the cytoplasm. The catalysed reaction is GTP + H2O = GDP + phosphate + H(+). Functionally, GTP hydrolase that promotes the GTP-dependent binding of aminoacyl-tRNA to the A-site of ribosomes during protein biosynthesis. This is Elongation factor Tu from Bacillus anthracis (strain A0248).